The primary structure comprises 156 residues: Small ribosomal subunit protein uS7 (156 aa).

This sequence belongs to the universal ribosomal protein uS7 family. In terms of assembly, part of the 30S ribosomal subunit. Contacts proteins S9 and S11.

Functionally, one of the primary rRNA binding proteins, it binds directly to 16S rRNA where it nucleates assembly of the head domain of the 30S subunit. Is located at the subunit interface close to the decoding center, probably blocks exit of the E-site tRNA. The sequence is that of Small ribosomal subunit protein uS7 from Teredinibacter turnerae (strain ATCC 39867 / T7901).